The chain runs to 156 residues: MAKQHGKHPDTALAQNRKARHDYAVEETYEAGIALTGTEIKSVRDRRVNLKDGFVQVRNGEAWMQNVHISPFKEGNRYNVDPLRSRKLLLHKKEISKLGAATMTKGVTIIPLKMYLKHGFAKVLIGVAHGKREYDKRQDIKKREQQRQIDRVMKHY.

This sequence belongs to the SmpB family.

It is found in the cytoplasm. In terms of biological role, required for rescue of stalled ribosomes mediated by trans-translation. Binds to transfer-messenger RNA (tmRNA), required for stable association of tmRNA with ribosomes. tmRNA and SmpB together mimic tRNA shape, replacing the anticodon stem-loop with SmpB. tmRNA is encoded by the ssrA gene; the 2 termini fold to resemble tRNA(Ala) and it encodes a 'tag peptide', a short internal open reading frame. During trans-translation Ala-aminoacylated tmRNA acts like a tRNA, entering the A-site of stalled ribosomes, displacing the stalled mRNA. The ribosome then switches to translate the ORF on the tmRNA; the nascent peptide is terminated with the 'tag peptide' encoded by the tmRNA and targeted for degradation. The ribosome is freed to recommence translation, which seems to be the essential function of trans-translation. This Lactiplantibacillus plantarum (strain ATCC BAA-793 / NCIMB 8826 / WCFS1) (Lactobacillus plantarum) protein is SsrA-binding protein.